Reading from the N-terminus, the 427-residue chain is Enolase 2 (427 aa).

Glutamine 165 lines the (2R)-2-phosphoglycerate pocket. Residue glutamate 207 is the Proton donor of the active site. Aspartate 244, glutamate 287, and aspartate 314 together coordinate Mg(2+). (2R)-2-phosphoglycerate-binding residues include lysine 339, arginine 368, serine 369, and lysine 390. Lysine 339 serves as the catalytic Proton acceptor.

This sequence belongs to the enolase family. Component of the RNA degradosome, a multiprotein complex involved in RNA processing and mRNA degradation. It depends on Mg(2+) as a cofactor.

The protein resides in the cytoplasm. It localises to the secreted. It is found in the cell surface. The enzyme catalyses (2R)-2-phosphoglycerate = phosphoenolpyruvate + H2O. The protein operates within carbohydrate degradation; glycolysis; pyruvate from D-glyceraldehyde 3-phosphate: step 4/5. Its function is as follows. Catalyzes the reversible conversion of 2-phosphoglycerate (2-PG) into phosphoenolpyruvate (PEP). It is essential for the degradation of carbohydrates via glycolysis. The sequence is that of Enolase 2 from Pseudomonas syringae pv. syringae (strain B728a).